A 110-amino-acid chain; its full sequence is Cell cycle protein GpsB (110 aa).

The stretch at 37–63 (KDYTVYIALVKELQEENAKLKAKATSA) forms a coiled coil. The interval 59–79 (KATSAPASRPAYASATSEPSH) is disordered. A compositionally biased stretch (low complexity) spans 60–75 (ATSAPASRPAYASATS).

This sequence belongs to the GpsB family. As to quaternary structure, forms polymers through the coiled coil domains. Interacts with PBP1, MreC and EzrA.

The protein resides in the cytoplasm. Functionally, divisome component that associates with the complex late in its assembly, after the Z-ring is formed, and is dependent on DivIC and PBP2B for its recruitment to the divisome. Together with EzrA, is a key component of the system that regulates PBP1 localization during cell cycle progression. Its main role could be the removal of PBP1 from the cell pole after pole maturation is completed. Also contributes to the recruitment of PBP1 to the division complex. Not essential for septum formation. The sequence is that of Cell cycle protein GpsB from Streptococcus thermophilus (strain CNRZ 1066).